A 711-amino-acid chain; its full sequence is MDDSDPPTYSLQIEPQDGCHPGDSVERRVTRLPSVSDENENQLAGDGPAGLTTSEGAMGRATVSEQDSLNNNESFPSSCEAAPTENAENTPSEGPKDDPPSLGQDQKLPAKRSPRAKKSSPKSAPPGDAVPVMQTQNATSQAAGEEEAAGVNANDPPKAPALQPLFSLIRGEVAQMDSRALPLFLHQVAETYFQEEDYEKAMKFIQLERLYHEQLLANLSAIQEQWETKWKAVQPRTVTPLRNSEKGFNGEDFEQLAKICTTHQDPLLSKLKTAPVEPSPERKSLARAIMSEEAVGTEAAAKEPEIETCPSTDPSGDRHEEEPQESSPGCHQMEWQTASPELPGTAGKDHTEELPSSTNATLDLHTQSLETAGSRSGPAAASNACKDSSCVPAPPTEDHCGVARDPKVAPPSESVAEQKLSTGDDGALPGLISEGKYSQAHRKELCLPLQDAFEALPRDQPHSSEVAEPRQPDVTASDGKSAQSQAGLETGPESALCGDRKACDVSTLCLEVCMAPEERRDSEDRVSKETEDYLHSLLERCLKDAEDSLSYEDIQDDDSDLLQDLSPEEASYSLQEDLPPDESTLSLDDLAKKIEIAEAIPAEGLVSILKKRNDTVGSHPAQMQQKPAKRRVRFQEIDDNLEQDEVGGGSCILLILLCIATVFLSVGGTALYCTLGNIESPVCTDFADNVDFYYTKLLQGVAGLKHWVYLS.

5 disordered regions span residues 1 to 157, 294 to 332, 370 to 389, 394 to 432, and 457 to 496; these read MDDS…NDPP, AVGT…GCHQ, ETAG…KDSS, PPTE…PGLI, and PRDQ…ESAL. The Cytoplasmic segment spans residues 1-650; sequence MDDSDPPTYS…LEQDEVGGGS (650 aa). Residues 63–77 are compositionally biased toward polar residues; the sequence is VSEQDSLNNNESFPS. Residues 109–120 are compositionally biased toward basic residues; the sequence is PAKRSPRAKKSS. 2 stretches are compositionally biased toward basic and acidic residues: residues 396 to 407 and 457 to 471; these read TEDHCGVARDPK and PRDQ…EPRQ. A compositionally biased stretch (polar residues) spans 478–487; that stretch reads DGKSAQSQAG. A helical membrane pass occupies residues 651-671; it reads CILLILLCIATVFLSVGGTAL. Residues 672 to 711 are Extracellular-facing; that stretch reads YCTLGNIESPVCTDFADNVDFYYTKLLQGVAGLKHWVYLS.

Belongs to the CNST family. In terms of assembly, interacts with connexins GJA1/CX43, GJB1/CX32, GJB2/CX26, GJB3/CX31, GJB6/CX30 and GJC1/CX45. Also interacts with GGA1 and GGA2. Does not interact with PANX1.

It localises to the cell membrane. The protein localises to the golgi apparatus. It is found in the trans-Golgi network membrane. Its subcellular location is the cytoplasmic vesicle. The protein resides in the secretory vesicle. Required for targeting of connexins to the plasma membrane. In Mus musculus (Mouse), this protein is Consortin (Cnst).